We begin with the raw amino-acid sequence, 283 residues long: Pantothenate synthetase (283 aa).

An ATP-binding site is contributed by 30–37; sequence MGNLHDGH. H37 acts as the Proton donor in catalysis. Q61 is a (R)-pantoate binding site. Residue Q61 participates in beta-alanine binding. Position 149-152 (149-152) interacts with ATP; it reads GEKD. Q155 is a binding site for (R)-pantoate. 186 to 189 is a binding site for ATP; the sequence is LSSR.

It belongs to the pantothenate synthetase family. In terms of assembly, homodimer.

It localises to the cytoplasm. The enzyme catalyses (R)-pantoate + beta-alanine + ATP = (R)-pantothenate + AMP + diphosphate + H(+). It participates in cofactor biosynthesis; (R)-pantothenate biosynthesis; (R)-pantothenate from (R)-pantoate and beta-alanine: step 1/1. Catalyzes the condensation of pantoate with beta-alanine in an ATP-dependent reaction via a pantoyl-adenylate intermediate. The protein is Pantothenate synthetase of Shigella dysenteriae serotype 1 (strain Sd197).